Here is a 52-residue protein sequence, read N- to C-terminus: Lantibiotic epidermin (52 aa).

Positions 1-30 are excised as a propeptide; sequence MEAVKEKNDLFNLDVKVNAKESNDSGAEPR. The segment at residues 33–37 is a cross-link (lanthionine (Ser-Cys)); the sequence is SKFIC. The beta-methyllanthionine (Thr-Cys) cross-link spans 38–41; that stretch reads TPGC. A (Z)-2,3-didehydrobutyrine modification is found at threonine 44. Positions 46-51 form a cross-link, lanthionine (Ser-Cys); sequence SFNSYC. Positions 49-52 form a cross-link, S-(2-aminovinyl)-D-cysteine (Ser-Cys); it reads SYCC.

It belongs to the type A lantibiotic family. Post-translationally, maturation of lantibiotics involves the enzymatic conversion of Thr, and Ser into dehydrated AA and the formation of thioether bonds with cysteine. The C-terminal lanthionine undergoes decarboxylation. This is followed by membrane translocation and cleavage of the modified precursor. The 2,3-didehydrobutyrine is determined to be the Z-isomer.

Lanthionine-containing peptide antibiotic (lantibiotic) active on Gram-positive bacteria. The bactericidal activity of lantibiotics is based on depolarization of energized bacterial cytoplasmic membranes, initiated by the formation of aqueous transmembrane pores. The protein is Lantibiotic epidermin (epiA) of Staphylococcus epidermidis.